Consider the following 1039-residue polypeptide: RNA-binding protein Unr (1039 aa).

Residues 49–62 (TTLGLQPQGQGPSP) show a composition bias toward polar residues. Disordered stretches follow at residues 49-126 (TTLG…QQQH) and 165-184 (SIFGSQSSNSSAAAADPSQT). 3 stretches are compositionally biased toward low complexity: residues 63-80 (QQQQHQQQQQQQQQQHQQ), 89-126 (QQHMQQQQQQQQHQQQHQQQQHQQQQQHQQQQQQQQQH), and 165-182 (SIFGSQSSNSSAAAADPS). One can recognise a CSD 1 domain in the interval 186–250 (RETGIIEKLL…GKPIASQVSK (65 aa)). A CSD 2; degenerate domain is found at 261-337 (RVTGTVTTEL…GNLGACHIRL (77 aa)). The region spanning 345 to 413 (KYRGVVCSMK…GREFACNITR (69 aa)) is the CSD 3 domain. The region spanning 428–503 (VYKGQVLKSL…RDQLQRATSI (76 aa)) is the CSD 4; degenerate domain. In terms of domain architecture, CSD 5 spans 517–585 (REQGTIASLK…SRLQAIRIKH (69 aa)). Residues 593 to 673 (FETLVASNIE…KECIAVNVQQ (81 aa)) enclose the CSD 6; degenerate domain. Residues 721-741 (QNGYVMHGSPGGSTSSVGSNN) are disordered. The segment covering 732 to 741 (GSTSSVGSNN) has biased composition (low complexity). One can recognise a CSD 7 domain in the interval 763–831 (VYRGFIAVMK…NCLPAENVRM (69 aa)). The CSD 8; degenerate domain maps to 846–919 (THNGVVARPL…SGRAACVNAV (74 aa)). Residues 922–987 (KKRATVDSIK…GKSSACNVLK (66 aa)) form the CSD 9 domain.

Belongs to the UNR family. As to quaternary structure, interacts with Sxl; cooperates with Sxl to prevent translation of msl-2 transcripts. Interacts with mle; promoting association between mle and roX2 non-coding RNA. Interacts (via CSD domain 7-9) with pAbp; promoting translation inhibition of msl-2 transcripts.

It localises to the cytoplasm. RNA-binding protein that acts as a regulator of dosage compensation in both males and females. In males, acts as positive regulator of dosage compensation by promoting assembly of the MSL complex, a multiprotein complex that mediates X-chromosome dosage compensation. Promotes MSL complex assembly via association with roX1 and roX2 non-coding RNA components of the MSL complex, facilitating the interaction between non-coding RNAs and mle. In females, acts as an inhibitor of dosage compensation together with Sxl by preventing production of msl-2 protein, an essential component of the MSL complex. Specifically binds to the 3'-UTR of msl-2 transcripts, and cooperates with Sxl to prevent translation initiation of msl-2 transcripts. Mechanistically, Sxl and Unr inhibit translation initiation by preventing ribosome recruitment after pAbp-mediated recruitment of the eIF4F complex. The chain is RNA-binding protein Unr from Drosophila melanogaster (Fruit fly).